We begin with the raw amino-acid sequence, 172 residues long: MSRQHAYSREELLATARGELFSHSNARLPNDPMLMFDRITEIYADGGSHGKGIVNAELDIRPDLWFFGCHFLGDPVMPGCLGLDAMWQLTGFFLTWSGATPGYGRALGCGEVKFTGQVLPNAKLVRYEVEMTKIINRTLVIGQANARMLVDNREIYFAKDLRVGMFNNTESF.

The active site involves H70.

The protein belongs to the thioester dehydratase family. FabA subfamily. Homodimer.

It is found in the cytoplasm. It catalyses the reaction a (3R)-hydroxyacyl-[ACP] = a (2E)-enoyl-[ACP] + H2O. The catalysed reaction is (3R)-hydroxydecanoyl-[ACP] = (2E)-decenoyl-[ACP] + H2O. It carries out the reaction (2E)-decenoyl-[ACP] = (3Z)-decenoyl-[ACP]. The protein operates within lipid metabolism; fatty acid biosynthesis. Necessary for the introduction of cis unsaturation into fatty acids. Catalyzes the dehydration of (3R)-3-hydroxydecanoyl-ACP to E-(2)-decenoyl-ACP and then its isomerization to Z-(3)-decenoyl-ACP. Can catalyze the dehydratase reaction for beta-hydroxyacyl-ACPs with saturated chain lengths up to 16:0, being most active on intermediate chain length. The protein is 3-hydroxydecanoyl-[acyl-carrier-protein] dehydratase of Xylella fastidiosa (strain M23).